Reading from the N-terminus, the 329-residue chain is Microtubule-associated protein RP/EB family member 1C (329 aa).

The 103-residue stretch at 13-115 folds into the Calponin-homology (CH) domain; it reads FVGRSEILAW…FMQWMKKYCD (103 aa). The segment covering 130-141 has biased composition (basic and acidic residues); sequence REASKGGKEATK. The interval 130–203 is disordered; it reads REASKGGKEA…SAKQSKPVPA (74 aa). The span at 174 to 185 shows a compositional bias: low complexity; the sequence is SNNTGTHHSSTG. One can recognise an EB1 C-terminal domain in the interval 193–263; that stretch reads PSAKQSKPVP…LYAADGEDVG (71 aa). A required for nuclear localization region spans residues 289–311; it reads KRKLIVNLDVDVAAITTLSPRQR.

It belongs to the MAPRE family. As to quaternary structure, homodimer. As to expression, highly expressed in the root and shoot meristems, in guard cells of leaf stomata, pollen grains and pollen tubes.

It localises to the nucleus. The protein localises to the cytoplasm. The protein resides in the cytoskeleton. Its subcellular location is the spindle. It is found in the phragmoplast. Its function is as follows. Plant-specific EB1 subtype that functions preferentially at early stages of plant mitosis by regulating spindle positioning and chromosome segregation. Accumulates in the prophase nucleus and is required to maintain spindle bipolarity during premetaphase and/or metaphase and for efficient segregation of chromosomes at anaphase. May play a role in the dynamics of microtubule network in elongating pollen tubes. This Arabidopsis thaliana (Mouse-ear cress) protein is Microtubule-associated protein RP/EB family member 1C (EB1C).